The sequence spans 506 residues: F-box protein At4g02760 (506 aa).

Positions 115 to 161 constitute an F-box domain; that stretch reads TSWPLLPELTIKVFSMLDTKSLMQASACCTMFNKCAMDRVCYSHIDL. Residues 452 to 506 are disordered; the sequence is TFVAEFRSPSPSESDVRSPSPSSSSDSSSSSDSSSSSSSGESSDESGTEEEEDED. The span at 459–492 shows a compositional bias: low complexity; the sequence is SPSPSESDVRSPSPSSSSDSSSSSDSSSSSSSGE. Residues 493-506 show a composition bias toward acidic residues; sequence SSDESGTEEEEDED.

The sequence is that of F-box protein At4g02760 from Arabidopsis thaliana (Mouse-ear cress).